The primary structure comprises 242 residues: 2-C-methyl-D-erythritol 4-phosphate cytidylyltransferase (242 aa).

It belongs to the IspD/TarI cytidylyltransferase family. IspD subfamily.

It carries out the reaction 2-C-methyl-D-erythritol 4-phosphate + CTP + H(+) = 4-CDP-2-C-methyl-D-erythritol + diphosphate. The protein operates within isoprenoid biosynthesis; isopentenyl diphosphate biosynthesis via DXP pathway; isopentenyl diphosphate from 1-deoxy-D-xylulose 5-phosphate: step 2/6. In terms of biological role, catalyzes the formation of 4-diphosphocytidyl-2-C-methyl-D-erythritol from CTP and 2-C-methyl-D-erythritol 4-phosphate (MEP). The protein is 2-C-methyl-D-erythritol 4-phosphate cytidylyltransferase of Halorhodospira halophila (strain DSM 244 / SL1) (Ectothiorhodospira halophila (strain DSM 244 / SL1)).